A 385-amino-acid polypeptide reads, in one-letter code: S-adenosylmethionine synthase (385 aa).

Position 15 (His-15) interacts with ATP. Mg(2+) is bound at residue Asp-17. Residue Glu-43 participates in K(+) binding. L-methionine is bound by residues Glu-56 and Gln-99. The flexible loop stretch occupies residues 99-109; the sequence is QSPDINKGINN. Residues 164–166, 230–231, Asp-239, 245–246, Ala-262, and Lys-266 contribute to the ATP site; these read DAK, RF, and RK. Residue Asp-239 coordinates L-methionine. Position 270 (Lys-270) interacts with L-methionine.

The protein belongs to the AdoMet synthase family. As to quaternary structure, homotetramer; dimer of dimers. Mg(2+) is required as a cofactor. K(+) serves as cofactor.

The protein localises to the cytoplasm. It carries out the reaction L-methionine + ATP + H2O = S-adenosyl-L-methionine + phosphate + diphosphate. Its pathway is amino-acid biosynthesis; S-adenosyl-L-methionine biosynthesis; S-adenosyl-L-methionine from L-methionine: step 1/1. Its function is as follows. Catalyzes the formation of S-adenosylmethionine (AdoMet) from methionine and ATP. The overall synthetic reaction is composed of two sequential steps, AdoMet formation and the subsequent tripolyphosphate hydrolysis which occurs prior to release of AdoMet from the enzyme. This Baumannia cicadellinicola subsp. Homalodisca coagulata protein is S-adenosylmethionine synthase.